The sequence spans 50 residues: Photosystem II reaction center protein M (50 aa).

A helical membrane pass occupies residues 7 to 27 (GFIISLLFVGIPTIFLVGLYI). A disordered region spans residues 31-50 (DGEKSSFFSDSSKGKLGPKS).

This sequence belongs to the PsbM family. As to quaternary structure, PSII is composed of 1 copy each of membrane proteins PsbA, PsbB, PsbC, PsbD, PsbE, PsbF, PsbH, PsbI, PsbJ, PsbK, PsbL, PsbM, PsbT, PsbX, PsbY, Psb30/Ycf12, peripheral proteins PsbO, CyanoQ (PsbQ), PsbU, PsbV and a large number of cofactors. It forms dimeric complexes.

The protein resides in the cellular thylakoid membrane. Functionally, one of the components of the core complex of photosystem II (PSII). PSII is a light-driven water:plastoquinone oxidoreductase that uses light energy to abstract electrons from H(2)O, generating O(2) and a proton gradient subsequently used for ATP formation. It consists of a core antenna complex that captures photons, and an electron transfer chain that converts photonic excitation into a charge separation. This subunit is found at the monomer-monomer interface. The protein is Photosystem II reaction center protein M of Prochlorococcus marinus (strain SARG / CCMP1375 / SS120).